Consider the following 139-residue polypeptide: uncharacterized protein (139 aa).

It to E.coli YecT.

This is an uncharacterized protein from Rhizobium meliloti (strain 1021) (Ensifer meliloti).